Reading from the N-terminus, the 122-residue chain is Large ribosomal subunit protein uL14 (122 aa).

This sequence belongs to the universal ribosomal protein uL14 family. As to quaternary structure, part of the 50S ribosomal subunit. Forms a cluster with proteins L3 and L19. In the 70S ribosome, L14 and L19 interact and together make contacts with the 16S rRNA in bridges B5 and B8.

Binds to 23S rRNA. Forms part of two intersubunit bridges in the 70S ribosome. The polypeptide is Large ribosomal subunit protein uL14 (Trichlorobacter lovleyi (strain ATCC BAA-1151 / DSM 17278 / SZ) (Geobacter lovleyi)).